Consider the following 887-residue polypeptide: Alanine--tRNA ligase (887 aa).

Zn(2+) is bound by residues His564, His568, Cys676, and His680.

The protein belongs to the class-II aminoacyl-tRNA synthetase family. Requires Zn(2+) as cofactor.

The protein resides in the cytoplasm. It catalyses the reaction tRNA(Ala) + L-alanine + ATP = L-alanyl-tRNA(Ala) + AMP + diphosphate. Catalyzes the attachment of alanine to tRNA(Ala) in a two-step reaction: alanine is first activated by ATP to form Ala-AMP and then transferred to the acceptor end of tRNA(Ala). Also edits incorrectly charged Ser-tRNA(Ala) and Gly-tRNA(Ala) via its editing domain. The protein is Alanine--tRNA ligase of Chelativorans sp. (strain BNC1).